A 616-amino-acid polypeptide reads, in one-letter code: Dihydroxy-acid dehydratase (616 aa).

Aspartate 81 serves as a coordination point for Mg(2+). [2Fe-2S] cluster is bound at residue cysteine 122. 2 residues coordinate Mg(2+): aspartate 123 and lysine 124. Lysine 124 carries the N6-carboxylysine modification. Cysteine 197 serves as a coordination point for [2Fe-2S] cluster. Glutamate 493 lines the Mg(2+) pocket. Catalysis depends on serine 519, which acts as the Proton acceptor.

This sequence belongs to the IlvD/Edd family. As to quaternary structure, homodimer. It depends on [2Fe-2S] cluster as a cofactor. Mg(2+) is required as a cofactor.

The catalysed reaction is (2R)-2,3-dihydroxy-3-methylbutanoate = 3-methyl-2-oxobutanoate + H2O. The enzyme catalyses (2R,3R)-2,3-dihydroxy-3-methylpentanoate = (S)-3-methyl-2-oxopentanoate + H2O. The protein operates within amino-acid biosynthesis; L-isoleucine biosynthesis; L-isoleucine from 2-oxobutanoate: step 3/4. Its pathway is amino-acid biosynthesis; L-valine biosynthesis; L-valine from pyruvate: step 3/4. Functionally, functions in the biosynthesis of branched-chain amino acids. Catalyzes the dehydration of (2R,3R)-2,3-dihydroxy-3-methylpentanoate (2,3-dihydroxy-3-methylvalerate) into 2-oxo-3-methylpentanoate (2-oxo-3-methylvalerate) and of (2R)-2,3-dihydroxy-3-methylbutanoate (2,3-dihydroxyisovalerate) into 2-oxo-3-methylbutanoate (2-oxoisovalerate), the penultimate precursor to L-isoleucine and L-valine, respectively. The chain is Dihydroxy-acid dehydratase from Corynebacterium kroppenstedtii (strain DSM 44385 / JCM 11950 / CIP 105744 / CCUG 35717).